The primary structure comprises 181 residues: Acireductone dioxygenase 2 (181 aa).

Residues His-97, His-99, Glu-103, and His-141 each contribute to the Fe(2+) site. Residues His-97, His-99, Glu-103, and His-141 each coordinate Ni(2+).

The protein belongs to the acireductone dioxygenase (ARD) family. In terms of assembly, monomer. It depends on Fe(2+) as a cofactor. The cofactor is Ni(2+).

It catalyses the reaction 1,2-dihydroxy-5-(methylsulfanyl)pent-1-en-3-one + O2 = 3-(methylsulfanyl)propanoate + CO + formate + 2 H(+). The catalysed reaction is 1,2-dihydroxy-5-(methylsulfanyl)pent-1-en-3-one + O2 = 4-methylsulfanyl-2-oxobutanoate + formate + 2 H(+). The protein operates within amino-acid biosynthesis; L-methionine biosynthesis via salvage pathway; L-methionine from S-methyl-5-thio-alpha-D-ribose 1-phosphate: step 5/6. Functionally, catalyzes 2 different reactions between oxygen and the acireductone 1,2-dihydroxy-3-keto-5-methylthiopentene (DHK-MTPene) depending upon the metal bound in the active site. Fe-containing acireductone dioxygenase (Fe-ARD) produces formate and 2-keto-4-methylthiobutyrate (KMTB), the alpha-ketoacid precursor of methionine in the methionine recycle pathway. Ni-containing acireductone dioxygenase (Ni-ARD) produces methylthiopropionate, carbon monoxide and formate, and does not lie on the methionine recycle pathway. The polypeptide is Acireductone dioxygenase 2 (Pectobacterium atrosepticum (strain SCRI 1043 / ATCC BAA-672) (Erwinia carotovora subsp. atroseptica)).